A 151-amino-acid chain; its full sequence is 6,7-dimethyl-8-ribityllumazine synthase (151 aa).

5-amino-6-(D-ribitylamino)uracil contacts are provided by residues phenylalanine 15, 47–49 (TFE), and 71–73 (AVI). 76 to 77 (ET) is a binding site for (2S)-2-hydroxy-3-oxobutyl phosphate. The active-site Proton donor is the histidine 79. 5-amino-6-(D-ribitylamino)uracil is bound at residue leucine 104. Residue arginine 119 participates in (2S)-2-hydroxy-3-oxobutyl phosphate binding.

This sequence belongs to the DMRL synthase family.

It catalyses the reaction (2S)-2-hydroxy-3-oxobutyl phosphate + 5-amino-6-(D-ribitylamino)uracil = 6,7-dimethyl-8-(1-D-ribityl)lumazine + phosphate + 2 H2O + H(+). Its pathway is cofactor biosynthesis; riboflavin biosynthesis; riboflavin from 2-hydroxy-3-oxobutyl phosphate and 5-amino-6-(D-ribitylamino)uracil: step 1/2. Catalyzes the formation of 6,7-dimethyl-8-ribityllumazine by condensation of 5-amino-6-(D-ribitylamino)uracil with 3,4-dihydroxy-2-butanone 4-phosphate. This is the penultimate step in the biosynthesis of riboflavin. In Metallosphaera sedula (strain ATCC 51363 / DSM 5348 / JCM 9185 / NBRC 15509 / TH2), this protein is 6,7-dimethyl-8-ribityllumazine synthase.